Here is a 220-residue protein sequence, read N- to C-terminus: Metalloproteinase inhibitor 2 (220 aa).

Residues 1-26 (MGAAARSLRLALGLLLLATLPRPADA) form the signal peptide. Cys27 serves as a coordination point for Zn(2+). Involved in metalloproteinase-binding regions lie at residues 27–30 (CSCS) and 95–96 (SA). 6 cysteine pairs are disulfide-bonded: Cys27/Cys98, Cys29/Cys127, Cys39/Cys152, Cys154/Cys201, Cys159/Cys164, and Cys172/Cys193. The region spanning 27-152 (CSCSPVHPQQ…SLNHRYQMGC (126 aa)) is the NTR domain.

It belongs to the protease inhibitor I35 (TIMP) family. As to quaternary structure, interacts (via the C-terminal) with MMP2 (via the C-terminal PEX domain); the interaction inhibits the MMP2 activity. The activity of TIMP2 is dependent on the presence of disulfide bonds.

The protein localises to the secreted. Its function is as follows. Complexes with metalloproteinases (such as collagenases) and irreversibly inactivates them by binding to their catalytic zinc cofactor. This Canis lupus familiaris (Dog) protein is Metalloproteinase inhibitor 2 (TIMP2).